Consider the following 111-residue polypeptide: Large ribosomal subunit protein uL23 (111 aa).

This sequence belongs to the universal ribosomal protein uL23 family. In terms of assembly, part of the 50S ribosomal subunit. Contacts protein L29, and trigger factor when it is bound to the ribosome.

Its function is as follows. One of the early assembly proteins it binds 23S rRNA. One of the proteins that surrounds the polypeptide exit tunnel on the outside of the ribosome. Forms the main docking site for trigger factor binding to the ribosome. This is Large ribosomal subunit protein uL23 from Chlamydia caviae (strain ATCC VR-813 / DSM 19441 / 03DC25 / GPIC) (Chlamydophila caviae).